The chain runs to 408 residues: Translation initiation factor 2 subunit gamma (408 aa).

A tr-type G domain is found at 4 to 201 (QSEINIGLVG…TIEERIKTPK (198 aa)). The tract at residues 13–20 (GHVDHGKT) is G1. Positions 16, 20, 41, and 43 each coordinate Mg(2+). 16–21 (DHGKTT) contacts GTP. Residues 41–45 (GISIR) are G2. The Zn(2+) site is built by cysteine 56, cysteine 59, cysteine 71, and cysteine 74. The G3 stretch occupies residues 88 to 91 (DAPG). GTP is bound by residues 144-147 (NKID) and 179-181 (SAQ). Residues 144-147 (NKID) are G4. The interval 179–181 (SAQ) is G5.

This sequence belongs to the TRAFAC class translation factor GTPase superfamily. Classic translation factor GTPase family. EIF2G subfamily. As to quaternary structure, heterotrimer composed of an alpha, a beta and a gamma chain. Mg(2+) serves as cofactor.

The enzyme catalyses GTP + H2O = GDP + phosphate + H(+). Its function is as follows. eIF-2 functions in the early steps of protein synthesis by forming a ternary complex with GTP and initiator tRNA. In Methanothermobacter thermautotrophicus (strain ATCC 29096 / DSM 1053 / JCM 10044 / NBRC 100330 / Delta H) (Methanobacterium thermoautotrophicum), this protein is Translation initiation factor 2 subunit gamma.